The following is a 69-amino-acid chain: RICYLAPRDTQICAPGQEICYLKSWDDGTGSIRGNRLEFGCAATCPTVKRGIHIKCCSTDKCNPHPKLA.

4 cysteine pairs are disulfide-bonded: Cys-3–Cys-20, Cys-13–Cys-41, Cys-45–Cys-56, and Cys-57–Cys-62.

Belongs to the three-finger toxin family. Long-chain subfamily. Type II alpha-neurotoxin sub-subfamily. In terms of tissue distribution, expressed by the venom gland.

The protein localises to the secreted. In terms of biological role, binds with high affinity to muscular nicotinic acetylcholine receptors (nAChRs), whereas it binds with a low affinity to neuronal alpha-7/CHRNA7 nAChRs. The polypeptide is Toxin Lc b (Laticauda colubrina (Yellow-lipped sea krait)).